Reading from the N-terminus, the 422-residue chain is Succinate--CoA ligase [ADP-forming] subunit beta, mitochondrial (422 aa).

Residues 1–27 constitute a mitochondrion transit peptide; the sequence is MVRGSLGKLASRALSVAGKWQHQQLRR. Positions 36 to 279 constitute an ATP-grasp domain; it reads AELMGKYGIN…TTQEDPREVA (244 aa). ATP is bound by residues K75, 82–84, and E142; that span reads GRG. Positions 234 and 248 each coordinate Mg(2+). Residues N299 and 356-358 each bind substrate; that span reads GIM.

It belongs to the succinate/malate CoA ligase beta subunit family. Heterodimer of an alpha and a beta subunit. Mg(2+) serves as cofactor.

It localises to the mitochondrion. The enzyme catalyses succinate + ATP + CoA = succinyl-CoA + ADP + phosphate. It participates in carbohydrate metabolism; tricarboxylic acid cycle; succinate from succinyl-CoA (ligase route): step 1/1. Functionally, succinyl-CoA synthetase functions in the citric acid cycle (TCA), coupling the hydrolysis of succinyl-CoA to the synthesis of ATP and thus represents the only step of substrate-level phosphorylation in the TCA. The beta subunit provides nucleotide specificity of the enzyme and binds the substrate succinate, while the binding sites for coenzyme A and phosphate are found in the alpha subunit. This is Succinate--CoA ligase [ADP-forming] subunit beta, mitochondrial from Oryza sativa subsp. japonica (Rice).